Consider the following 207-residue polypeptide: Uracil phosphoribosyltransferase (207 aa).

5-phospho-alpha-D-ribose 1-diphosphate-binding positions include Arg77, Arg102, and 129-137 (DPMLATGVS). Residues Ile192 and 197-199 (GDA) each bind uracil. Asp198 contacts 5-phospho-alpha-D-ribose 1-diphosphate.

This sequence belongs to the UPRTase family. It depends on Mg(2+) as a cofactor.

It catalyses the reaction UMP + diphosphate = 5-phospho-alpha-D-ribose 1-diphosphate + uracil. Its pathway is pyrimidine metabolism; UMP biosynthesis via salvage pathway; UMP from uracil: step 1/1. With respect to regulation, allosterically activated by GTP. Catalyzes the conversion of uracil and 5-phospho-alpha-D-ribose 1-diphosphate (PRPP) to UMP and diphosphate. The chain is Uracil phosphoribosyltransferase from Fervidobacterium nodosum (strain ATCC 35602 / DSM 5306 / Rt17-B1).